The sequence spans 411 residues: ATP-dependent Clp protease ATP-binding subunit ClpX (411 aa).

In terms of domain architecture, ClpX-type ZB spans 1–49 (MSDKNIRCSFCGRTQKEVKKLIAGPGVYICDECVKLAYDIIEEEDSEEI). The Zn(2+) site is built by C8, C11, C30, and C33. 115–122 (PTGVGKTL) provides a ligand contact to ATP.

Belongs to the ClpX chaperone family. As to quaternary structure, component of the ClpX-ClpP complex. Forms a hexameric ring that, in the presence of ATP, binds to fourteen ClpP subunits assembled into a disk-like structure with a central cavity, resembling the structure of eukaryotic proteasomes.

Functionally, ATP-dependent specificity component of the Clp protease. It directs the protease to specific substrates. Can perform chaperone functions in the absence of ClpP. The sequence is that of ATP-dependent Clp protease ATP-binding subunit ClpX from Dictyoglomus turgidum (strain DSM 6724 / Z-1310).